Here is a 303-residue protein sequence, read N- to C-terminus: tRNA pseudouridine synthase B (303 aa).

The active-site Nucleophile is Asp53.

It belongs to the pseudouridine synthase TruB family. Type 1 subfamily.

It catalyses the reaction uridine(55) in tRNA = pseudouridine(55) in tRNA. Functionally, responsible for synthesis of pseudouridine from uracil-55 in the psi GC loop of transfer RNAs. The protein is tRNA pseudouridine synthase B of Zymomonas mobilis subsp. mobilis (strain ATCC 31821 / ZM4 / CP4).